The primary structure comprises 303 residues: RELT-like protein 2 (303 aa).

Residues 15–35 (LYMLFLLVLVFFLMGLVGFMI) traverse the membrane as a helical segment. Disordered stretches follow at residues 47–68 (RTSRGSEPDDAQLQPPEDDDVN), 135–214 (CSRS…QPRT), and 249–303 (PCTL…AGGM). A Phosphoserine modification is found at Ser52. 2 stretches are compositionally biased toward basic and acidic residues: residues 148–158 (RSKEGKSRPRP) and 172–188 (THIEKRYGLHEHRDGSP). Positions 194-212 (GSGGGQEPGGSQAAGGGQP) are enriched in gly residues. Residues 274 to 295 (GLSSQEANGQPTKLDTSGQQES) show a composition bias toward polar residues.

Belongs to the RELT family. In terms of assembly, interacts with RELT, RELL1, OXSR1, PLSCR1 and TRAF2.

It is found in the cell membrane. In terms of biological role, induces activation of MAPK14/p38 cascade, when overexpressed. Induces apoptosis, when overexpressed. The chain is RELT-like protein 2 (Rell2) from Mus musculus (Mouse).